A 642-amino-acid polypeptide reads, in one-letter code: tRNA uridine 5-carboxymethylaminomethyl modification enzyme MnmG (642 aa).

FAD is bound at residue 24–29; it reads GGGHAG. Residue 284–298 participates in NAD(+) binding; the sequence is GPRYCPSIEDKIHRF.

This sequence belongs to the MnmG family. In terms of assembly, homodimer. Heterotetramer of two MnmE and two MnmG subunits. Requires FAD as cofactor.

It is found in the cytoplasm. Its function is as follows. NAD-binding protein involved in the addition of a carboxymethylaminomethyl (cmnm) group at the wobble position (U34) of certain tRNAs, forming tRNA-cmnm(5)s(2)U34. This Psychrobacter sp. (strain PRwf-1) protein is tRNA uridine 5-carboxymethylaminomethyl modification enzyme MnmG.